The following is a 347-amino-acid chain: Terpene synthase 2 (347 aa).

4 residues coordinate Mg(2+): aspartate 103, asparagine 247, serine 251, and glutamate 255. Residues 103-107 (DDLLE) carry the D(D/E)XX(D/E) motif motif. The short motif at 247–255 (NDIFSLKKE) is the NSE motif element. The WxxxxxRY motif signature appears at 329–336 (WCSKSTRY).

Belongs to the terpene synthase family. Mg(2+) serves as cofactor.

In terms of biological role, terpene synthase that may be involved in the production of volatile terpenoids. Does not show detectable terpene products with either farnesyl diphosphate (FPP) or geranyl diphosphate (GPP). P.polycephalum has a unique biology and these volatile terpenoids could function in internal communication of P.polycephalum, to mark the territory that have been explored, or they may be involved in chemotaxis. This is Terpene synthase 2 from Physarum polycephalum (Slime mold).